Here is a 1202-residue protein sequence, read N- to C-terminus: Putative late blight resistance protein homolog R1B-8 (1202 aa).

2 coiled-coil regions span residues R345–Q368 and L437–N459. An NB-ARC domain is found at I426–E741. ATP is bound at residue G471–T478. LRR repeat units follow at residues F865 to L889, L908 to M936, P1011 to P1036, Y1040 to H1059, L1060 to G1084, F1086 to N1111, and S1128 to S1151.

Belongs to the disease resistance NB-LRR family.

The protein localises to the cytoplasm. The protein resides in the membrane. Functionally, confers resistance to late blight (Phytophthora infestans) races carrying the avirulence gene Avr1. Resistance proteins guard the plant against pathogens that contain an appropriate avirulence protein via an indirect interaction with this avirulence protein. That triggers a defense system including the hypersensitive response, which restricts the pathogen growth. The sequence is that of Putative late blight resistance protein homolog R1B-8 (R1B-8) from Solanum demissum (Wild potato).